Here is a 374-residue protein sequence, read N- to C-terminus: 3-dehydroquinate synthase (374 aa).

It belongs to the archaeal-type DHQ synthase family.

The enzyme catalyses 2-amino-2,3,7-trideoxy-D-lyxo-hept-6-ulosonate + NAD(+) + H2O = 3-dehydroquinate + NH4(+) + NADH + H(+). In terms of biological role, catalyzes the oxidative deamination and cyclization of 2-amino-3,7-dideoxy-D-threo-hept-6-ulosonic acid (ADH) to yield 3-dehydroquinate (DHQ), which is fed into the canonical shikimic pathway of aromatic amino acid biosynthesis. This chain is 3-dehydroquinate synthase, found in Methanothermobacter thermautotrophicus (strain ATCC 29096 / DSM 1053 / JCM 10044 / NBRC 100330 / Delta H) (Methanobacterium thermoautotrophicum).